The sequence spans 200 residues: GTP-binding protein rho5 (200 aa).

13-20 serves as a coordination point for GTP; that stretch reads GDGACGKT. Positions 35-43 match the Effector region motif; the sequence is YVPTVFENY. GTP is bound by residues 60–64 and 118–121; these read DTAGQ and CKVD. Cys197 bears the Cysteine methyl ester mark. Cys197 carries the S-geranylgeranyl cysteine lipid modification. Residues 198–200 constitute a propeptide, removed in mature form; that stretch reads ILL.

Belongs to the small GTPase superfamily. Rho family.

The protein localises to the cell membrane. In Schizosaccharomyces pombe (strain 972 / ATCC 24843) (Fission yeast), this protein is GTP-binding protein rho5 (rho5).